Reading from the N-terminus, the 521-residue chain is Amidase (521 aa).

Active-site charge relay system residues include K96 and S171. The disordered stretch occupies residues 155 to 174 (SGPVRNPWDRQREAGGSSGG). S195 serves as the catalytic Acyl-ester intermediate.

It belongs to the amidase family. In terms of assembly, homodimer.

The enzyme catalyses a monocarboxylic acid amide + H2O = a monocarboxylate + NH4(+). In terms of biological role, hydrolyzes propionamides efficiently, and also at a lower efficiency, acetamide, acrylamide and indoleacetamide. This enzyme seems to be stereospecific and can lead to the production of a single enantiomer. This Rhodococcus erythropolis (Arthrobacter picolinophilus) protein is Amidase (amdA).